The following is a 247-amino-acid chain: PF03932 family protein CutC (247 aa).

It belongs to the CutC family.

Its subcellular location is the cytoplasm. This Vibrio campbellii (strain ATCC BAA-1116) protein is PF03932 family protein CutC.